A 65-amino-acid polypeptide reads, in one-letter code: MNAPTERPETSVDPKLLEILVCPLTKGPLEFDSAKQELISRSAKLAYPIRDGIPIMLPEEARKID.

It belongs to the UPF0434 family.

This Bradyrhizobium diazoefficiens (strain JCM 10833 / BCRC 13528 / IAM 13628 / NBRC 14792 / USDA 110) protein is UPF0434 protein bsr0601.